The following is a 67-amino-acid chain: DNA-directed RNA polymerase subunit omega (67 aa).

It belongs to the RNA polymerase subunit omega family. In terms of assembly, the RNAP catalytic core consists of 2 alpha, 1 beta, 1 beta' and 1 omega subunit. When a sigma factor is associated with the core the holoenzyme is formed, which can initiate transcription.

It catalyses the reaction RNA(n) + a ribonucleoside 5'-triphosphate = RNA(n+1) + diphosphate. In terms of biological role, promotes RNA polymerase assembly. Latches the N- and C-terminal regions of the beta' subunit thereby facilitating its interaction with the beta and alpha subunits. This is DNA-directed RNA polymerase subunit omega from Nautilia profundicola (strain ATCC BAA-1463 / DSM 18972 / AmH).